We begin with the raw amino-acid sequence, 247 residues long: Ribonuclease PH (247 aa).

Residues arginine 90 and 128–130 (GTR) each bind phosphate.

It belongs to the RNase PH family. In terms of assembly, homohexameric ring arranged as a trimer of dimers.

It catalyses the reaction tRNA(n+1) + phosphate = tRNA(n) + a ribonucleoside 5'-diphosphate. Phosphorolytic 3'-5' exoribonuclease that plays an important role in tRNA 3'-end maturation. Removes nucleotide residues following the 3'-CCA terminus of tRNAs; can also add nucleotides to the ends of RNA molecules by using nucleoside diphosphates as substrates, but this may not be physiologically important. Probably plays a role in initiation of 16S rRNA degradation (leading to ribosome degradation) during starvation. This chain is Ribonuclease PH, found in Synechococcus sp. (strain CC9605).